The chain runs to 322 residues: Beta-1,3-galactosyltransferase bre-5 (322 aa).

Residues 1 to 16 lie on the Cytoplasmic side of the membrane; that stretch reads MFLCVRILKRKYHELS. A helical; Signal-anchor for type II membrane protein transmembrane segment spans residues 17-37; sequence SFQKLLIFTITIFLLWVLGVV. The Lumenal segment spans residues 38–322; it reads DKFRETSFGD…YEYSQLNGFE (285 aa). The N-linked (GlcNAc...) asparagine glycan is linked to Asn150.

It belongs to the glycosyltransferase 31 family. As to expression, expressed in the gut.

Its subcellular location is the golgi apparatus membrane. It participates in protein modification; protein glycosylation. Transfers N-acetylgalactosamine onto mannose groups of carbohydrate substrates. Required for susceptibility to pore-forming crystal toxins in conjunction with bre-1, bre-2, bre-3, and bre-4. Involved in resistance to the nematotoxic C.cinerea galectin Cgl2. This Caenorhabditis elegans protein is Beta-1,3-galactosyltransferase bre-5.